The sequence spans 156 residues: Transcription factor MafF (156 aa).

The basic motif stretch occupies residues 51–76 (RLKQRRRTLKNRGYAASCRVKRVCQK). Positions 51-114 (RLKQRRRTLK…DALRGKCEAL (64 aa)) constitute a bZIP domain. A leucine-zipper region spans residues 79-93 (LQKQKSELEREVDKL).

This sequence belongs to the bZIP family. Maf subfamily. As to quaternary structure, monomer and homo- or heterodimer. Interacts with MIP. Forms high affinity heterodimers with members of the CNC-bZIP family such as NFE2L1/NRF1. As to expression, highly expressed in the lung, lower expression in the brain, thymus, liver, spleen, intestine, kidney, heart, muscle, and ovary. Not significantly expressed in hematopoietic cells.

The protein resides in the nucleus. Its function is as follows. Since they lack a putative transactivation domain, the small Mafs behave as transcriptional repressors when they dimerize among themselves. However, they seem to serve as transcriptional activators by dimerizing with other (usually larger) basic-zipper proteins, such as NFE2L1/NRF1, and recruiting them to specific DNA-binding sites. Interacts with the upstream promoter region of the oxytocin receptor gene. May be a transcriptional enhancer in the up-regulation of the oxytocin receptor gene at parturition. The protein is Transcription factor MafF (Maff) of Mus musculus (Mouse).